The primary structure comprises 738 residues: Polyribonucleotide nucleotidyltransferase (738 aa).

Mg(2+)-binding residues include Asp-487 and Asp-493. One can recognise a KH domain in the interval 554–613 (PKIVTMTINPDKIRDVIGPGGKMINSIIDQTGVKIDIEQDGTVFIASTDQEGIDLAMSMI). An S1 motif domain is found at 623–691 (GEVYDATVRR…DKGRVNASRK (69 aa)). The disordered stretch occupies residues 704 to 738 (EAYEAKRKAARESRPPRDSRPPRRDGDRRPPRSTN).

Belongs to the polyribonucleotide nucleotidyltransferase family. Mg(2+) is required as a cofactor.

The protein resides in the cytoplasm. The enzyme catalyses RNA(n+1) + phosphate = RNA(n) + a ribonucleoside 5'-diphosphate. Involved in mRNA degradation. Catalyzes the phosphorolysis of single-stranded polyribonucleotides processively in the 3'- to 5'-direction. The chain is Polyribonucleotide nucleotidyltransferase from Exiguobacterium sp. (strain ATCC BAA-1283 / AT1b).